Reading from the N-terminus, the 465-residue chain is Glutamate--tRNA ligase (465 aa).

The 'HIGH' region signature appears at 8–18 (PSPTGYLHIGG). The short motif at 236 to 240 (RLSKR) is the 'KMSKS' region element. Lys239 is a binding site for ATP.

Belongs to the class-I aminoacyl-tRNA synthetase family. Glutamate--tRNA ligase type 1 subfamily. In terms of assembly, monomer.

It is found in the cytoplasm. It carries out the reaction tRNA(Glu) + L-glutamate + ATP = L-glutamyl-tRNA(Glu) + AMP + diphosphate. In terms of biological role, catalyzes the attachment of glutamate to tRNA(Glu) in a two-step reaction: glutamate is first activated by ATP to form Glu-AMP and then transferred to the acceptor end of tRNA(Glu). This Nitrosospira multiformis (strain ATCC 25196 / NCIMB 11849 / C 71) protein is Glutamate--tRNA ligase.